The following is a 90-amino-acid chain: Signal recognition particle 19 kDa protein (90 aa).

It belongs to the SRP19 family. In terms of assembly, part of the signal recognition particle protein translocation system, which is composed of SRP and FtsY. Archaeal SRP consists of a 7S RNA molecule of 300 nucleotides and two protein subunits: SRP54 and SRP19.

Its subcellular location is the cytoplasm. Functionally, involved in targeting and insertion of nascent membrane proteins into the cytoplasmic membrane. Binds directly to 7S RNA and mediates binding of the 54 kDa subunit of the SRP. This chain is Signal recognition particle 19 kDa protein, found in Methanococcus aeolicus (strain ATCC BAA-1280 / DSM 17508 / OCM 812 / Nankai-3).